The sequence spans 256 residues: Imidazole glycerol phosphate synthase subunit HisF (256 aa).

Catalysis depends on residues aspartate 11 and aspartate 130.

This sequence belongs to the HisA/HisF family. As to quaternary structure, heterodimer of HisH and HisF.

The protein resides in the cytoplasm. It catalyses the reaction 5-[(5-phospho-1-deoxy-D-ribulos-1-ylimino)methylamino]-1-(5-phospho-beta-D-ribosyl)imidazole-4-carboxamide + L-glutamine = D-erythro-1-(imidazol-4-yl)glycerol 3-phosphate + 5-amino-1-(5-phospho-beta-D-ribosyl)imidazole-4-carboxamide + L-glutamate + H(+). Its pathway is amino-acid biosynthesis; L-histidine biosynthesis; L-histidine from 5-phospho-alpha-D-ribose 1-diphosphate: step 5/9. Its function is as follows. IGPS catalyzes the conversion of PRFAR and glutamine to IGP, AICAR and glutamate. The HisF subunit catalyzes the cyclization activity that produces IGP and AICAR from PRFAR using the ammonia provided by the HisH subunit. The protein is Imidazole glycerol phosphate synthase subunit HisF of Prochlorococcus marinus (strain MIT 9215).